Consider the following 359-residue polypeptide: Membrane-bound lytic murein transglycosylase C (359 aa).

Residues 1–16 (MKKYLALALIAPLLIS) form the signal peptide. C17 carries N-palmitoyl cysteine lipidation. C17 carries the S-diacylglycerol cysteine lipid modification.

The protein belongs to the transglycosylase Slt family.

The protein localises to the cell outer membrane. It catalyses the reaction Exolytic cleavage of the (1-&gt;4)-beta-glycosidic linkage between N-acetylmuramic acid (MurNAc) and N-acetylglucosamine (GlcNAc) residues in peptidoglycan, from either the reducing or the non-reducing ends of the peptidoglycan chains, with concomitant formation of a 1,6-anhydrobond in the MurNAc residue.. Functionally, murein-degrading enzyme. May play a role in recycling of muropeptides during cell elongation and/or cell division. The chain is Membrane-bound lytic murein transglycosylase C from Escherichia coli O81 (strain ED1a).